A 754-amino-acid chain; its full sequence is 1,4-alpha-glucan branching enzyme GlgB (754 aa).

Residue D431 is the Nucleophile of the active site. The active-site Proton donor is E484.

Belongs to the glycosyl hydrolase 13 family. GlgB subfamily. As to quaternary structure, monomer.

The catalysed reaction is Transfers a segment of a (1-&gt;4)-alpha-D-glucan chain to a primary hydroxy group in a similar glucan chain.. It participates in glycan biosynthesis; glycogen biosynthesis. In terms of biological role, catalyzes the formation of the alpha-1,6-glucosidic linkages in glycogen by scission of a 1,4-alpha-linked oligosaccharide from growing alpha-1,4-glucan chains and the subsequent attachment of the oligosaccharide to the alpha-1,6 position. The sequence is that of 1,4-alpha-glucan branching enzyme GlgB from Prochlorococcus marinus (strain MIT 9515).